Here is a 309-residue protein sequence, read N- to C-terminus: Probable manganese-dependent inorganic pyrophosphatase (309 aa).

Residues H9, D13, D15, D75, H97, and D149 each coordinate Mn(2+).

Belongs to the PPase class C family. It depends on Mn(2+) as a cofactor.

It localises to the cytoplasm. The catalysed reaction is diphosphate + H2O = 2 phosphate + H(+). This Staphylococcus haemolyticus (strain JCSC1435) protein is Probable manganese-dependent inorganic pyrophosphatase.